The chain runs to 340 residues: MAINVYYDKDCDLSLIQSRKVAIIGFGSQGHAHAENLRDNGVSVVIGLVKGGKSWAKAEAKGFEVKTVSEATKGADVIMILTPDELQAEIYKNEIEPNLKDHAAIAFGHGFNVHFGQIKAPANIDVIMIAPKAPGHTVRSEFLRGGGIPDLIAVEQNASGKAKEIALSYACGIGGGRTGIIETTFKDETETDLFGEQAVLCGGLCALVNAGFDTLVEAGYEPEMAYFECLHELKLIVDLMYQGGMADMRYSISNTAEYGDYVSGVRVVGEESRKAMKEVLKEIQNGKFAKDFILERKAGYVRMNAERGIAERSLLNKTGKKLRAMMPWITNGKLIDQSKN.

A KARI N-terminal Rossmann domain is found at 3–183 (INVYYDKDCD…GGGRTGIIET (181 aa)). Residues 26-29 (FGSQ), serine 54, and 84-87 (DELQ) contribute to the NADP(+) site. Histidine 109 is an active-site residue. Glycine 135 contributes to the NADP(+) binding site. The region spanning 184-329 (TFKDETETDL…KKLRAMMPWI (146 aa)) is the KARI C-terminal knotted domain. Aspartate 192, glutamate 196, glutamate 228, and glutamate 232 together coordinate Mg(2+). Position 253 (serine 253) interacts with substrate.

It belongs to the ketol-acid reductoisomerase family. The cofactor is Mg(2+).

The enzyme catalyses (2R)-2,3-dihydroxy-3-methylbutanoate + NADP(+) = (2S)-2-acetolactate + NADPH + H(+). The catalysed reaction is (2R,3R)-2,3-dihydroxy-3-methylpentanoate + NADP(+) = (S)-2-ethyl-2-hydroxy-3-oxobutanoate + NADPH + H(+). It participates in amino-acid biosynthesis; L-isoleucine biosynthesis; L-isoleucine from 2-oxobutanoate: step 2/4. It functions in the pathway amino-acid biosynthesis; L-valine biosynthesis; L-valine from pyruvate: step 2/4. Involved in the biosynthesis of branched-chain amino acids (BCAA). Catalyzes an alkyl-migration followed by a ketol-acid reduction of (S)-2-acetolactate (S2AL) to yield (R)-2,3-dihydroxy-isovalerate. In the isomerase reaction, S2AL is rearranged via a Mg-dependent methyl migration to produce 3-hydroxy-3-methyl-2-ketobutyrate (HMKB). In the reductase reaction, this 2-ketoacid undergoes a metal-dependent reduction by NADPH to yield (R)-2,3-dihydroxy-isovalerate. The protein is Ketol-acid reductoisomerase (NADP(+)) of Campylobacter concisus (strain 13826).